The primary structure comprises 335 residues: 5-formaminoimidazole-4-carboxamide-1-(beta)-D-ribofuranosyl 5'-monophosphate synthetase (335 aa).

2 residues coordinate 5-amino-1-(5-phospho-beta-D-ribosyl)imidazole-4-carboxamide: H21 and S86. An ATP-grasp domain is found at 107–315; sequence RELLRWEADQ…YFDKPMDMGE (209 aa). ATP is bound by residues 137 to 189 and E211; that span reads PTEV…VPAY. A 5-amino-1-(5-phospho-beta-D-ribosyl)imidazole-4-carboxamide-binding site is contributed by N231. E270 and E283 together coordinate Mg(2+).

This sequence belongs to the phosphohexose mutase family. Mg(2+) serves as cofactor. Mn(2+) is required as a cofactor.

The enzyme catalyses 5-amino-1-(5-phospho-beta-D-ribosyl)imidazole-4-carboxamide + formate + ATP = 5-formamido-1-(5-phospho-D-ribosyl)imidazole-4-carboxamide + ADP + phosphate. It functions in the pathway purine metabolism; IMP biosynthesis via de novo pathway; 5-formamido-1-(5-phospho-D-ribosyl)imidazole-4-carboxamide from 5-amino-1-(5-phospho-D-ribosyl)imidazole-4-carboxamide (formate route): step 1/1. Its function is as follows. Catalyzes the ATP- and formate-dependent formylation of 5-aminoimidazole-4-carboxamide-1-beta-d-ribofuranosyl 5'-monophosphate (AICAR) to 5-formaminoimidazole-4-carboxamide-1-beta-d-ribofuranosyl 5'-monophosphate (FAICAR) in the absence of folates. This chain is 5-formaminoimidazole-4-carboxamide-1-(beta)-D-ribofuranosyl 5'-monophosphate synthetase, found in Pyrobaculum arsenaticum (strain DSM 13514 / JCM 11321 / PZ6).